Reading from the N-terminus, the 83-residue chain is uncharacterized protein (83 aa).

It belongs to the UPF0440 family.

This is an uncharacterized protein from Natronomonas pharaonis (strain ATCC 35678 / DSM 2160 / CIP 103997 / JCM 8858 / NBRC 14720 / NCIMB 2260 / Gabara) (Halobacterium pharaonis).